Reading from the N-terminus, the 398-residue chain is tRNA(Ile)-lysidine synthase (398 aa).

25 to 30 (SGGVDS) provides a ligand contact to ATP.

The protein belongs to the tRNA(Ile)-lysidine synthase family.

The protein localises to the cytoplasm. It catalyses the reaction cytidine(34) in tRNA(Ile2) + L-lysine + ATP = lysidine(34) in tRNA(Ile2) + AMP + diphosphate + H(+). Functionally, ligates lysine onto the cytidine present at position 34 of the AUA codon-specific tRNA(Ile) that contains the anticodon CAU, in an ATP-dependent manner. Cytidine is converted to lysidine, thus changing the amino acid specificity of the tRNA from methionine to isoleucine. The polypeptide is tRNA(Ile)-lysidine synthase (Francisella tularensis subsp. tularensis (strain SCHU S4 / Schu 4)).